Consider the following 200-residue polypeptide: Small ribosomal subunit protein uS4 (200 aa).

Positions 22 to 41 are disordered; it reads TGKELQKRPYAPGQHGPNQR. The S4 RNA-binding domain occupies 92–152; it reads SRLDNLVYRM…EKSRNLQVIK (61 aa).

This sequence belongs to the universal ribosomal protein uS4 family. As to quaternary structure, part of the 30S ribosomal subunit. Contacts protein S5. The interaction surface between S4 and S5 is involved in control of translational fidelity.

Functionally, one of the primary rRNA binding proteins, it binds directly to 16S rRNA where it nucleates assembly of the body of the 30S subunit. With S5 and S12 plays an important role in translational accuracy. This is Small ribosomal subunit protein uS4 from Halalkalibacterium halodurans (strain ATCC BAA-125 / DSM 18197 / FERM 7344 / JCM 9153 / C-125) (Bacillus halodurans).